The following is a 471-amino-acid chain: Tryptophanase (471 aa).

Lys-256 carries the post-translational modification N6-(pyridoxal phosphate)lysine.

It belongs to the beta-eliminating lyase family. In terms of assembly, homotetramer. Pyridoxal 5'-phosphate serves as cofactor.

The catalysed reaction is L-tryptophan + H2O = indole + pyruvate + NH4(+). It functions in the pathway amino-acid degradation; L-tryptophan degradation via pyruvate pathway; indole and pyruvate from L-tryptophan: step 1/1. The protein is Tryptophanase of Salinibacter ruber (strain DSM 13855 / M31).